Consider the following 190-residue polypeptide: Elongation factor P-like protein (190 aa).

Belongs to the elongation factor P family.

The polypeptide is Elongation factor P-like protein (Edwardsiella ictaluri (strain 93-146)).